Consider the following 224-residue polypeptide: Beta-casein (224 aa).

The N-terminal stretch at 1–15 (MKVLILACLVALALA) is a signal peptide. Phosphoserine occurs at positions 30, 32, 33, and 34. Serine 50 carries the phosphoserine; in variant A1, variant A2, variant A3, variant B, variant E, variant F, variant G and variant H modification.

It belongs to the beta-casein family. In terms of tissue distribution, mammary gland specific. Secreted in milk.

Its subcellular location is the secreted. Its function is as follows. Important role in determination of the surface properties of the casein micelles. Casoparan acts as a macrophage activator, increasing the phagocytic activity of macrophages and peroxide release from macrophages. It also acts as a bradykinin-potentiating peptide. Functionally, casohypotensin acts as a bradykinin-potentiating peptide. Induces hypotension in rats. Acts as a strong competitive inhibitor of endo-oligopeptidase A. In terms of biological role, antioxidant peptide has antioxidant activity. The chain is Beta-casein (CSN2) from Bos taurus (Bovine).